We begin with the raw amino-acid sequence, 919 residues long: Coiled-coil domain-containing protein 66 (919 aa).

Disordered regions lie at residues 145-166 (KEET…KDEN), 456-505 (ERDR…RERE), 724-744 (ERNN…LPSP), and 762-816 (LKSD…EPSH). Residues 150–161 (QDSLHLNNTSNQ) show a composition bias toward polar residues. The stretch at 467-558 (HQKAITAQVE…EQRIRELAQK (92 aa)) forms a coiled coil. The mediates localization to cilia, centrosomes and spindle microtubules and the interaction with PCM1, CEP290, CEP104 and CSPP1 stretch occupies residues 570–919 (GGYGLDDVSG…NQEENFNSSF (350 aa)).

As to quaternary structure, homodimer; disulfide-linked. Interacts with CEP290. Interacts with PCM1. Interacts with ARMC9, TOGARAM1, CSPP1 and CEP104. Interacts with CDK5RAP2, CEP152, CEP192, TBG1 and PRC1. In terms of tissue distribution, expressed in retina and blood. Expressed in retina, mainly in photoreceptors but also in outer plexiform and ganglion cell layers (at protein level).

The protein localises to the cytoplasm. The protein resides in the cytoskeleton. It is found in the microtubule organizing center. Its subcellular location is the centrosome. It localises to the centriolar satellite. The protein localises to the cell projection. The protein resides in the cilium. It is found in the cilium basal body. Its subcellular location is the cilium axoneme. It localises to the photoreceptor inner segment. The protein localises to the photoreceptor outer segment. In terms of biological role, microtubule-binding protein required for ciliogenesis. May function in ciliogenesis by mediating the transport of proteins like BBS4 to the cilium, but also through the organization of the centriolar satellites. Required for the assembly of signaling-competent cilia with proper structure and length. Mediates this function in part by regulating transition zone assembly and basal body recruitment of the IFT-B complex. Cooperates with the ciliopathy proteins CSPP1 and CEP104 during cilium length regulation. Plays two important roles during cell division. First, is required for mitotic progression via regulation of spindle assembly, organization and orientation, levels of spindle microtubules (MTs), kinetochore-fiber integrity, and chromosome alignment. Second, functions during cytokinesis in part by regulating assembly and organization of central spindle and midbody MTs. Plays a role in retina morphogenesis and/or homeostasis. The protein is Coiled-coil domain-containing protein 66 (CCDC66) of Canis lupus familiaris (Dog).